A 572-amino-acid chain; its full sequence is Potassium-transporting ATPase potassium-binding subunit (572 aa).

The next 10 membrane-spanning stretches (helical) occupy residues Ile6–Ile26, Phe66–Leu86, Ala135–Ile155, Ile177–Val197, Thr251–Tyr271, Gly283–Ile303, Ile382–Phe402, Met428–Ile448, Ile493–Leu513, and Phe537–Pro557.

It belongs to the KdpA family. The system is composed of three essential subunits: KdpA, KdpB and KdpC.

The protein localises to the cell inner membrane. Part of the high-affinity ATP-driven potassium transport (or Kdp) system, which catalyzes the hydrolysis of ATP coupled with the electrogenic transport of potassium into the cytoplasm. This subunit binds the periplasmic potassium ions and delivers the ions to the membrane domain of KdpB through an intramembrane tunnel. This is Potassium-transporting ATPase potassium-binding subunit from Francisella philomiragia subsp. philomiragia (strain ATCC 25017 / CCUG 19701 / FSC 153 / O#319-036).